Reading from the N-terminus, the 351-residue chain is Glycerol-1-phosphate dehydrogenase [NAD(P)+] (351 aa).

NAD(+) is bound by residues 97–101 (GTVID) and 119–122 (TSPS). Asp124 contacts substrate. NAD(+) is bound at residue Ser128. Asp171 lines the substrate pocket. Residues Asp171 and His251 each coordinate Zn(2+). His255 is a substrate binding site. His267 is a binding site for Zn(2+).

The protein belongs to the glycerol-1-phosphate dehydrogenase family. As to quaternary structure, homodimer. Zn(2+) is required as a cofactor.

The protein resides in the cytoplasm. It catalyses the reaction sn-glycerol 1-phosphate + NAD(+) = dihydroxyacetone phosphate + NADH + H(+). The catalysed reaction is sn-glycerol 1-phosphate + NADP(+) = dihydroxyacetone phosphate + NADPH + H(+). The protein operates within membrane lipid metabolism; glycerophospholipid metabolism. Functionally, catalyzes the NAD(P)H-dependent reduction of dihydroxyacetonephosphate (DHAP or glycerone phosphate) to glycerol 1-phosphate (G1P). The G1P thus generated is used as the glycerophosphate backbone of phospholipids in the cellular membranes of Archaea. The protein is Glycerol-1-phosphate dehydrogenase [NAD(P)+] of Sulfolobus acidocaldarius (strain ATCC 33909 / DSM 639 / JCM 8929 / NBRC 15157 / NCIMB 11770).